A 62-amino-acid chain; its full sequence is Small ribosomal subunit protein eS27 (62 aa).

Positions 17, 20, 36, and 39 each coordinate Zn(2+). Residues 17 to 39 (CPDCENEQVVFERASTVVECTVC) form a C4-type zinc finger.

It belongs to the eukaryotic ribosomal protein eS27 family. Part of the 30S ribosomal subunit. Zn(2+) serves as cofactor.

The sequence is that of Small ribosomal subunit protein eS27 from Methanoculleus marisnigri (strain ATCC 35101 / DSM 1498 / JR1).